Here is a 394-residue protein sequence, read N- to C-terminus: Ribulose bisphosphate carboxylase large chain (394 aa).

An N6,N6,N6-trimethyllysine modification is found at Lys5. Substrate is bound by residues Asn114 and Thr164. The Proton acceptor role is filled by Lys166. Residue Lys168 participates in substrate binding. 3 residues coordinate Mg(2+): Lys192, Asp194, and Glu195. Lys192 carries the N6-carboxylysine modification. His285 acts as the Proton acceptor in catalysis. 3 residues coordinate substrate: Arg286, His318, and Ser370.

The protein belongs to the RuBisCO large chain family. Type I subfamily. As to quaternary structure, heterohexadecamer of 8 large chains and 8 small chains. It depends on Mg(2+) as a cofactor.

It localises to the plastid. Its subcellular location is the chloroplast. The enzyme catalyses 2 (2R)-3-phosphoglycerate + 2 H(+) = D-ribulose 1,5-bisphosphate + CO2 + H2O. It catalyses the reaction D-ribulose 1,5-bisphosphate + O2 = 2-phosphoglycolate + (2R)-3-phosphoglycerate + 2 H(+). RuBisCO catalyzes two reactions: the carboxylation of D-ribulose 1,5-bisphosphate, the primary event in carbon dioxide fixation, as well as the oxidative fragmentation of the pentose substrate in the photorespiration process. Both reactions occur simultaneously and in competition at the same active site. This chain is Ribulose bisphosphate carboxylase large chain (rbcL), found in Cabomba caroliniana (Carolina fanwort).